The following is a 180-amino-acid chain: Inner membrane-spanning protein YciB (180 aa).

Transmembrane regions (helical) follow at residues 4 to 24 (LLSE…GGGI), 25 to 45 (QHAT…CYVI), 49 to 69 (VSKL…ITLI), 76 to 96 (IKIK…MSGI), 118 to 138 (ITLS…NEVV), and 150 to 170 (FKVF…LPLL).

The protein belongs to the YciB family.

The protein resides in the cell inner membrane. Functionally, plays a role in cell envelope biogenesis, maintenance of cell envelope integrity and membrane homeostasis. This is Inner membrane-spanning protein YciB from Rickettsia africae (strain ESF-5).